We begin with the raw amino-acid sequence, 892 residues long: Gamma-tubulin small complex component GCP3 (892 aa).

The protein belongs to the TUBGCP family. In terms of assembly, component of the gamma-tubulin small complex (gamma-TuSC) composed of tubulin gamma chain, gamma-tubulin complex protein 2 (GCP2) and gamma-tubulin complex protein 3 (GCP3). Interacts with tubulin gamma chain.

It is found in the cytoplasm. It localises to the cytoskeleton. The protein resides in the flagellum axoneme. The protein localises to the flagellum basal body. Component of the gamma-tubulin small complex (gamma-TuSC) involved in microtubule (MT) nucleation for the formation of median bodies and in the biogenesis of flagella. Gamma-TuSC may be required for the correct positioning of EB1 within the trophozoites. The chain is Gamma-tubulin small complex component GCP3 from Giardia intestinalis (strain ATCC 50803 / WB clone C6) (Giardia lamblia).